The chain runs to 31 residues: Cytochrome b6-f complex subunit 6 (31 aa).

Residues 4 to 26 traverse the membrane as a helical segment; the sequence is ITSYFGFLLTALTITSALFIGLS.

The protein belongs to the PetL family. In terms of assembly, the 4 large subunits of the cytochrome b6-f complex are cytochrome b6, subunit IV (17 kDa polypeptide, PetD), cytochrome f and the Rieske protein, while the 4 small subunits are PetG, PetL, PetM and PetN. The complex functions as a dimer.

It localises to the plastid. The protein localises to the chloroplast thylakoid membrane. In terms of biological role, component of the cytochrome b6-f complex, which mediates electron transfer between photosystem II (PSII) and photosystem I (PSI), cyclic electron flow around PSI, and state transitions. PetL is important for photoautotrophic growth as well as for electron transfer efficiency and stability of the cytochrome b6-f complex. In Lactuca sativa (Garden lettuce), this protein is Cytochrome b6-f complex subunit 6.